Consider the following 396-residue polypeptide: NADH-quinone oxidoreductase subunit D (396 aa).

The protein belongs to the complex I 49 kDa subunit family. In terms of assembly, NDH-1 is composed of 14 different subunits. Subunits NuoB, C, D, E, F, and G constitute the peripheral sector of the complex.

Its subcellular location is the cell inner membrane. The catalysed reaction is a quinone + NADH + 5 H(+)(in) = a quinol + NAD(+) + 4 H(+)(out). In terms of biological role, NDH-1 shuttles electrons from NADH, via FMN and iron-sulfur (Fe-S) centers, to quinones in the respiratory chain. The immediate electron acceptor for the enzyme in this species is believed to be ubiquinone. Couples the redox reaction to proton translocation (for every two electrons transferred, four hydrogen ions are translocated across the cytoplasmic membrane), and thus conserves the redox energy in a proton gradient. The sequence is that of NADH-quinone oxidoreductase subunit D from Rhodopseudomonas palustris (strain BisB18).